A 777-amino-acid chain; its full sequence is Phosphoribosylformylglycinamidine synthase subunit PurL (777 aa).

Residue His50 is part of the active site. The ATP site is built by Tyr53 and Lys92. A Mg(2+)-binding site is contributed by Glu94. Substrate is bound by residues 95 to 98 (SHNH) and Arg117. Catalysis depends on His96, which acts as the Proton acceptor. Asp118 lines the Mg(2+) pocket. Residue Gln241 participates in substrate binding. Position 269 (Asp269) interacts with Mg(2+). Position 313 to 315 (313 to 315 (ESQ)) interacts with substrate. Residues Asp516 and Gly553 each contribute to the ATP site. Asn554 lines the Mg(2+) pocket. A substrate-binding site is contributed by Ser556.

Belongs to the FGAMS family. Monomer. Part of the FGAM synthase complex composed of 1 PurL, 1 PurQ and 2 PurS subunits.

The protein localises to the cytoplasm. It carries out the reaction N(2)-formyl-N(1)-(5-phospho-beta-D-ribosyl)glycinamide + L-glutamine + ATP + H2O = 2-formamido-N(1)-(5-O-phospho-beta-D-ribosyl)acetamidine + L-glutamate + ADP + phosphate + H(+). Its pathway is purine metabolism; IMP biosynthesis via de novo pathway; 5-amino-1-(5-phospho-D-ribosyl)imidazole from N(2)-formyl-N(1)-(5-phospho-D-ribosyl)glycinamide: step 1/2. Its function is as follows. Part of the phosphoribosylformylglycinamidine synthase complex involved in the purines biosynthetic pathway. Catalyzes the ATP-dependent conversion of formylglycinamide ribonucleotide (FGAR) and glutamine to yield formylglycinamidine ribonucleotide (FGAM) and glutamate. The FGAM synthase complex is composed of three subunits. PurQ produces an ammonia molecule by converting glutamine to glutamate. PurL transfers the ammonia molecule to FGAR to form FGAM in an ATP-dependent manner. PurS interacts with PurQ and PurL and is thought to assist in the transfer of the ammonia molecule from PurQ to PurL. The chain is Phosphoribosylformylglycinamidine synthase subunit PurL from Synechococcus elongatus (strain ATCC 33912 / PCC 7942 / FACHB-805) (Anacystis nidulans R2).